Reading from the N-terminus, the 128-residue chain is Ribosome-binding factor A (128 aa).

The protein belongs to the RbfA family. Monomer. Binds 30S ribosomal subunits, but not 50S ribosomal subunits or 70S ribosomes.

The protein resides in the cytoplasm. One of several proteins that assist in the late maturation steps of the functional core of the 30S ribosomal subunit. Associates with free 30S ribosomal subunits (but not with 30S subunits that are part of 70S ribosomes or polysomes). Required for efficient processing of 16S rRNA. May interact with the 5'-terminal helix region of 16S rRNA. The polypeptide is Ribosome-binding factor A (Haemophilus influenzae (strain 86-028NP)).